Here is a 295-residue protein sequence, read N- to C-terminus: 4-hydroxy-tetrahydrodipicolinate synthase (295 aa).

Position 46 (Thr46) interacts with pyruvate. The active-site Proton donor/acceptor is the Tyr134. Lys162 (schiff-base intermediate with substrate) is an active-site residue. A pyruvate-binding site is contributed by Val204.

Belongs to the DapA family. In terms of assembly, homotetramer; dimer of dimers.

It is found in the cytoplasm. It carries out the reaction L-aspartate 4-semialdehyde + pyruvate = (2S,4S)-4-hydroxy-2,3,4,5-tetrahydrodipicolinate + H2O + H(+). It participates in amino-acid biosynthesis; L-lysine biosynthesis via DAP pathway; (S)-tetrahydrodipicolinate from L-aspartate: step 3/4. Its function is as follows. Catalyzes the condensation of (S)-aspartate-beta-semialdehyde [(S)-ASA] and pyruvate to 4-hydroxy-tetrahydrodipicolinate (HTPA). This Oceanobacillus iheyensis (strain DSM 14371 / CIP 107618 / JCM 11309 / KCTC 3954 / HTE831) protein is 4-hydroxy-tetrahydrodipicolinate synthase.